The primary structure comprises 213 residues: Thymidylate kinase (213 aa).

10–17 (GLEGAGKT) is a binding site for ATP.

This sequence belongs to the thymidylate kinase family.

It carries out the reaction dTMP + ATP = dTDP + ADP. Its function is as follows. Phosphorylation of dTMP to form dTDP in both de novo and salvage pathways of dTTP synthesis. This chain is Thymidylate kinase, found in Escherichia coli O81 (strain ED1a).